We begin with the raw amino-acid sequence, 421 residues long: Tyrosine--tRNA ligase (421 aa).

Y38 provides a ligand contact to L-tyrosine. Residues P43–H52 carry the 'HIGH' region motif. Y169 and Q173 together coordinate L-tyrosine. Residues K231–S235 carry the 'KMSKS' region motif. An ATP-binding site is contributed by K234. In terms of domain architecture, S4 RNA-binding spans K353 to I419.

It belongs to the class-I aminoacyl-tRNA synthetase family. TyrS type 1 subfamily. As to quaternary structure, homodimer.

Its subcellular location is the cytoplasm. It catalyses the reaction tRNA(Tyr) + L-tyrosine + ATP = L-tyrosyl-tRNA(Tyr) + AMP + diphosphate + H(+). Functionally, catalyzes the attachment of tyrosine to tRNA(Tyr) in a two-step reaction: tyrosine is first activated by ATP to form Tyr-AMP and then transferred to the acceptor end of tRNA(Tyr). This Lactobacillus delbrueckii subsp. bulgaricus (strain ATCC BAA-365 / Lb-18) protein is Tyrosine--tRNA ligase.